The chain runs to 307 residues: Leucine-rich repeat-containing protein 59 (307 aa).

Residues 1–247 lie on the Cytoplasmic side of the membrane; the sequence is MARANGRSQN…LAQRQSRLRK (247 aa). LRR repeat units follow at residues 10 to 31, 40 to 61, 63 to 84, 86 to 107, and 109 to 131; these read NLRD…SEVP, KATA…FCNL, HIVR…FGRL, NLQH…FAQL, and SLKW…AGDC. Positions 156–222 form a coiled coil; it reads EIELQRKLQL…LNSNKKAEEE (67 aa). The disordered stretch occupies residues 170–238; it reads KKKLEAKQRV…RMATPKEKKL (69 aa). 2 stretches are compositionally biased toward basic and acidic residues: residues 174 to 187 and 194 to 238; these read EAKQ…EREM and QQKE…EKKL. A helical membrane pass occupies residues 248-268; sequence IACILLFGLLVVLLVVVACRF. Residues 269-307 lie on the Lumenal side of the membrane; the sequence is TDLKAINMCTSVNAIYKETLSALHSNPVLERFLQDPSSQ.

As to quaternary structure, interacts with SGO1.

Its subcellular location is the microsome membrane. The protein localises to the endoplasmic reticulum membrane. It localises to the nucleus envelope. Its function is as follows. Required for nuclear import of FGF1. The chain is Leucine-rich repeat-containing protein 59 (lrrc59) from Xenopus laevis (African clawed frog).